The sequence spans 467 residues: Tripartite motif-containing protein 75 (467 aa).

An RING-type zinc finger spans residues 16–57 (CPICLDDLTDPVTVECGHNFCRSCIKDFWAGQQATSSCPVCR). A B box-type zinc finger spans residues 90-131 (ESSTSCERHNQALTLFCEDDLQLLCDQCVEPESHGRHQVLSI). Residues cysteine 95, histidine 98, cysteine 117, and histidine 123 each contribute to the Zn(2+) site. Residues 168-222 (VTLREQAEAQRSQLTSECEKLMRFLDQEERAAFSRLEDEEMRLEKRLLDNIAALE) are a coiled coil. In terms of domain architecture, B30.2/SPRY spans 276 to 466 (YSFPLQYSAL…LRLCSATDSE (191 aa)).

Belongs to the TRIM/RBCC family.

The protein localises to the cytoplasm. It is found in the cytoskeleton. It localises to the spindle. May play a role in female meiosis. The protein is Tripartite motif-containing protein 75 of Mus musculus (Mouse).